The sequence spans 526 residues: Phosphoenolpyruvate carboxykinase (ATP) (526 aa).

Arg55, Tyr190, and Lys196 together coordinate substrate. ATP is bound by residues Lys196, His215, and 231 to 239; that span reads GLSGTGKTT. 2 residues coordinate Mn(2+): Lys196 and His215. Residue Asp252 participates in Mn(2+) binding. ATP-binding residues include Glu280, Arg317, and Thr442. Arg317 serves as a coordination point for substrate.

The protein belongs to the phosphoenolpyruvate carboxykinase (ATP) family. The cofactor is Mn(2+).

It localises to the cytoplasm. The catalysed reaction is oxaloacetate + ATP = phosphoenolpyruvate + ADP + CO2. It participates in carbohydrate biosynthesis; gluconeogenesis. Involved in the gluconeogenesis. Catalyzes the conversion of oxaloacetate (OAA) to phosphoenolpyruvate (PEP) through direct phosphoryl transfer between the nucleoside triphosphate and OAA. This chain is Phosphoenolpyruvate carboxykinase (ATP), found in Alkaliphilus oremlandii (strain OhILAs) (Clostridium oremlandii (strain OhILAs)).